A 178-amino-acid chain; its full sequence is Putative magnesium-dependent phosphatase YER134C (178 aa).

Aspartate 11 acts as the Nucleophile in catalysis. Aspartate 11 contributes to the Mg(2+) binding site. Residues leucine 12, aspartate 13, serine 74, and arginine 75 each contribute to the phosphate site. Aspartate 13 serves as a coordination point for Mg(2+). Catalysis depends on aspartate 13, which acts as the Proton donor. Residue arginine 75 coordinates substrate. Residue aspartate 141 coordinates Mg(2+).

The protein belongs to the HAD-like hydrolase superfamily.

The protein resides in the cytoplasm. It localises to the nucleus. It catalyses the reaction O-phospho-L-tyrosyl-[protein] + H2O = L-tyrosyl-[protein] + phosphate. Its function is as follows. Magnesium-dependent phosphatase which may act as a tyrosine phosphatase. The sequence is that of Putative magnesium-dependent phosphatase YER134C from Saccharomyces cerevisiae (strain ATCC 204508 / S288c) (Baker's yeast).